The chain runs to 214 residues: Octanoyltransferase (214 aa).

Positions 32 to 207 (EDTLDEIWLV…NLLALLNHPP (176 aa)) constitute a BPL/LPL catalytic domain. Residues 71–78 (RGGQVTYH), 138–140 (SLG), and 151–153 (GLA) each bind substrate. The Acyl-thioester intermediate role is filled by C169.

The protein belongs to the LipB family.

The protein resides in the cytoplasm. The catalysed reaction is octanoyl-[ACP] + L-lysyl-[protein] = N(6)-octanoyl-L-lysyl-[protein] + holo-[ACP] + H(+). The protein operates within protein modification; protein lipoylation via endogenous pathway; protein N(6)-(lipoyl)lysine from octanoyl-[acyl-carrier-protein]: step 1/2. Catalyzes the transfer of endogenously produced octanoic acid from octanoyl-acyl-carrier-protein onto the lipoyl domains of lipoate-dependent enzymes. Lipoyl-ACP can also act as a substrate although octanoyl-ACP is likely to be the physiological substrate. This is Octanoyltransferase from Klebsiella pneumoniae subsp. pneumoniae (strain ATCC 700721 / MGH 78578).